Consider the following 313-residue polypeptide: Malate dehydrogenase (313 aa).

NAD(+) is bound by residues 11–16 (GAGSIG) and Asp-35. Arg-84 and Arg-90 together coordinate substrate. NAD(+)-binding positions include Asn-97 and 120–122 (VTN). 2 residues coordinate substrate: Asn-122 and Arg-153. His-177 functions as the Proton acceptor in the catalytic mechanism.

It belongs to the LDH/MDH superfamily. MDH type 3 family.

It catalyses the reaction (S)-malate + NAD(+) = oxaloacetate + NADH + H(+). Functionally, catalyzes the reversible oxidation of malate to oxaloacetate. This Ehrlichia chaffeensis (strain ATCC CRL-10679 / Arkansas) protein is Malate dehydrogenase.